The following is a 329-amino-acid chain: NADH-quinone oxidoreductase subunit H (329 aa).

Helical transmembrane passes span 9–29 (LIKILILVAVFSALGGFATYI), 42–62 (GPCYVGPFGLLQVAADGIKLF), 75–95 (FIFTLAPIIAMVSAFVSMAPI), 117–137 (IGFLFFLAVGAAGIYAPILAG), 154–174 (IQLLSFEVVSTLTILAPLMVV), 188–208 (GGFLDWLVFKQPLAFVLFLIA), 238–258 (LKWGMFFLAEYAHLFAFSFVI), 269–291 (WGFIPGGIAILIKAGFFVFLSMW), and 309–329 (WKIMLPLALLNIVLTGIIILI).

The protein belongs to the complex I subunit 1 family. As to quaternary structure, NDH-1 is composed of 14 different subunits. Subunits NuoA, H, J, K, L, M, N constitute the membrane sector of the complex.

The protein resides in the cell inner membrane. The enzyme catalyses a quinone + NADH + 5 H(+)(in) = a quinol + NAD(+) + 4 H(+)(out). Its function is as follows. NDH-1 shuttles electrons from NADH, via FMN and iron-sulfur (Fe-S) centers, to quinones in the respiratory chain. The immediate electron acceptor for the enzyme in this species is believed to be ubiquinone. Couples the redox reaction to proton translocation (for every two electrons transferred, four hydrogen ions are translocated across the cytoplasmic membrane), and thus conserves the redox energy in a proton gradient. This subunit may bind ubiquinone. This Helicobacter pylori (strain P12) protein is NADH-quinone oxidoreductase subunit H.